We begin with the raw amino-acid sequence, 388 residues long: Probable proton-coupled zinc antiporter SLC30A3 (388 aa).

The disordered stretch occupies residues 1–46 (MEPSPAAGGLETTRLVSPRDRGGAGGSLRLKSLFTEPSEPLPEESK). Topologically, residues 1–75 (MEPSPAAGGL…TPERLHARRQ (75 aa)) are cytoplasmic. Residues 76-96 (LYAACAVCFVFMAGEVVGGYL) form a helical membrane-spanning segment. Over 97-105 (AHSLAIMTD) the chain is Lumenal. A helical transmembrane segment spans residues 106–126 (AAHLLADVGSMMGSLFSLWLS). Residues H108 and D112 each coordinate Zn(2+). The Cytoplasmic segment spans residues 127-145 (TRPATRTMTFGWHRSETLG). Residues 146 to 166 (ALASVVSLWMVTGILLYLAFV) traverse the membrane as a helical segment. Over 167–177 (RLLHSDYHIEG) the chain is Lumenal. A helical transmembrane segment spans residues 178–198 (GAMLLTASIAVCANLLMAFVL). Residues 199 to 235 (HQAGPPHSHGSRGAEYAPLEEGPEEPLPLGNTSVRAA) lie on the Cytoplasmic side of the membrane. Residues 236–256 (FVHVLGDLLQSFGVLAASILI) traverse the membrane as a helical segment. Zn(2+) contacts are provided by H238 and D242. The Lumenal portion of the chain corresponds to 257 to 264 (YFKPQYKA). Residues 265 to 285 (ADPISTFLFSICALGSTAPTL) form a helical membrane-spanning segment. The Cytoplasmic segment spans residues 286–388 (RDVLRILMEG…CLRCQEPPQA (103 aa)). Y357 participates in a covalent cross-link: Dityrosine (Tyr-Tyr) (interchain with Y-372). Residue Y372 forms a Dityrosine (Tyr-Tyr) (interchain with Y-357) linkage.

It belongs to the cation diffusion facilitator (CDF) transporter (TC 2.A.4) family. SLC30A subfamily. As to quaternary structure, homodimer; dityrosine-linked. Homodimerization seems specific of the human protein and enhances the zinc transport efficiency. Interacts with TMEM163. Post-translationally, homodimerization through dityrosine bonds is stimulated by oxidative stress.

The protein resides in the cytoplasmic vesicle. It localises to the secretory vesicle. It is found in the synaptic vesicle membrane. The protein localises to the synapse. Its subcellular location is the synaptosome. The protein resides in the late endosome membrane. It localises to the lysosome membrane. The enzyme catalyses Zn(2+)(in) + 2 H(+)(out) = Zn(2+)(out) + 2 H(+)(in). Probable proton-coupled zinc ion antiporter mediating the import of zinc from cytoplasm into synaptic vesicles and participating to cellular zinc ion homeostasis in the brain. The polypeptide is Probable proton-coupled zinc antiporter SLC30A3 (Homo sapiens (Human)).